A 212-amino-acid polypeptide reads, in one-letter code: Thiamine-phosphate synthase (212 aa).

Residues 40–44 (QFREK) and asparagine 75 contribute to the 4-amino-2-methyl-5-(diphosphooxymethyl)pyrimidine site. Mg(2+)-binding residues include aspartate 76 and aspartate 95. Serine 113 serves as a coordination point for 4-amino-2-methyl-5-(diphosphooxymethyl)pyrimidine. 139 to 141 (TIS) is a binding site for 2-[(2R,5Z)-2-carboxy-4-methylthiazol-5(2H)-ylidene]ethyl phosphate. Position 142 (lysine 142) interacts with 4-amino-2-methyl-5-(diphosphooxymethyl)pyrimidine. Residues glycine 171 and 191–192 (IS) each bind 2-[(2R,5Z)-2-carboxy-4-methylthiazol-5(2H)-ylidene]ethyl phosphate.

Belongs to the thiamine-phosphate synthase family. Mg(2+) is required as a cofactor.

It carries out the reaction 2-[(2R,5Z)-2-carboxy-4-methylthiazol-5(2H)-ylidene]ethyl phosphate + 4-amino-2-methyl-5-(diphosphooxymethyl)pyrimidine + 2 H(+) = thiamine phosphate + CO2 + diphosphate. The catalysed reaction is 2-(2-carboxy-4-methylthiazol-5-yl)ethyl phosphate + 4-amino-2-methyl-5-(diphosphooxymethyl)pyrimidine + 2 H(+) = thiamine phosphate + CO2 + diphosphate. The enzyme catalyses 4-methyl-5-(2-phosphooxyethyl)-thiazole + 4-amino-2-methyl-5-(diphosphooxymethyl)pyrimidine + H(+) = thiamine phosphate + diphosphate. The protein operates within cofactor biosynthesis; thiamine diphosphate biosynthesis; thiamine phosphate from 4-amino-2-methyl-5-diphosphomethylpyrimidine and 4-methyl-5-(2-phosphoethyl)-thiazole: step 1/1. Condenses 4-methyl-5-(beta-hydroxyethyl)thiazole monophosphate (THZ-P) and 2-methyl-4-amino-5-hydroxymethyl pyrimidine pyrophosphate (HMP-PP) to form thiamine monophosphate (TMP). This is Thiamine-phosphate synthase from Staphylococcus haemolyticus (strain JCSC1435).